Reading from the N-terminus, the 1025-residue chain is Dihydropyrimidine dehydrogenase [NADP(+)] (1025 aa).

The 32-residue stretch at 69–100 (ERGALREAMRCLKCADAPCQKSCPTNLDIKSF) folds into the 4Fe-4S ferredoxin-type 1 domain. [4Fe-4S] cluster contacts are provided by C79, C82, C87, and C91. V129 contacts FAD. Residues C130, C136, C140, and Q156 each contribute to the [4Fe-4S] cluster site. FAD contacts are provided by residues 194-198 (GAGPA), 218-226 (EKQEYVGGI), R235, and L261. NADP(+) contacts are provided by residues 340-343 (AGDT), 364-365 (RK), and R371. Residue K384 is modified to N6-acetyllysine. NADP(+) is bound by residues 437–439 (AFG) and 481–487 (DVVGIAN). Residue 480-489 (GDVVGIANTT) participates in FAD binding. FMN is bound by residues S550 and 574-575 (KT). Substrate contacts are provided by residues N609 and 668-670 (NLS). The active-site Proton acceptor is the C671. K709 lines the FMN pocket. 736–737 (NT) lines the substrate pocket. FMN contacts are provided by residues G767, 793 to 795 (TGG), and 816 to 817 (CS). 4Fe-4S ferredoxin-type domains are found at residues 944–976 (VVAV…FDPE) and 978–1007 (HLPT…MVSR). The [4Fe-4S] cluster site is built by C953, C956, C959, C963, C986, C989, C992, and C996.

Belongs to the dihydropyrimidine dehydrogenase family. As to quaternary structure, homodimer. FAD is required as a cofactor. Requires FMN as cofactor. [4Fe-4S] cluster serves as cofactor.

Its subcellular location is the cytoplasm. It carries out the reaction 5,6-dihydrouracil + NADP(+) = uracil + NADPH + H(+). The catalysed reaction is 5,6-dihydrothymine + NADP(+) = thymine + NADPH + H(+). It participates in amino-acid biosynthesis; beta-alanine biosynthesis. Inactivated by 5-iodouracil. Its function is as follows. Involved in pyrimidine base degradation. Catalyzes the reduction of uracil and thymine. Also involved the degradation of the chemotherapeutic drug 5-fluorouracil. The sequence is that of Dihydropyrimidine dehydrogenase [NADP(+)] (DPYD) from Bos taurus (Bovine).